The sequence spans 318 residues: Coproporphyrin III ferrochelatase (318 aa).

Fe(2+) is bound by residues His-186 and Glu-268.

The protein belongs to the ferrochelatase family.

It localises to the cytoplasm. It carries out the reaction Fe-coproporphyrin III + 2 H(+) = coproporphyrin III + Fe(2+). It functions in the pathway porphyrin-containing compound metabolism; protoheme biosynthesis. Its function is as follows. Involved in coproporphyrin-dependent heme b biosynthesis. Catalyzes the insertion of ferrous iron into coproporphyrin III to form Fe-coproporphyrin III. This chain is Coproporphyrin III ferrochelatase, found in Lactococcus lactis subsp. cremoris (strain MG1363).